A 199-amino-acid polypeptide reads, in one-letter code: MKFSPLVDELIQSLKCLPGVGPKSAQRMAFQLLERDRKAGQTLAQALASAMSDVGHCRSCRTFTEESHCPICASNKRGQSEQICVVETPADVLAIEAGGHFSGRYFVLLGHLSPLDGVGPEELGLSLLEEHLCSGGVSELILATNPTVEGDATAHFIADMAKVHNVSVSRIAHGVPVGGELEYVDSTTLALSFNGRLPI.

A C4-type zinc finger spans residues 57 to 72; it reads CRSCRTFTEESHCPIC. In terms of domain architecture, Toprim spans 81-176; the sequence is EQICVVETPA…SVSRIAHGVP (96 aa).

This sequence belongs to the RecR family.

Functionally, may play a role in DNA repair. It seems to be involved in an RecBC-independent recombinational process of DNA repair. It may act with RecF and RecO. The polypeptide is Recombination protein RecR (Shewanella sediminis (strain HAW-EB3)).